A 291-amino-acid chain; its full sequence is 5'-3' exonuclease (291 aa).

The region spanning 176–269 (TPKQVIEYKG…VHAALKPIDK (94 aa)) is the 5'-3' exonuclease domain.

5'-3' exonuclease acting preferentially on double-stranded DNA. The sequence is that of 5'-3' exonuclease (polA) from Mycoplasma pneumoniae (strain ATCC 29342 / M129 / Subtype 1) (Mycoplasmoides pneumoniae).